The sequence spans 751 residues: Lanosterol synthase erg7A (751 aa).

Residues 1–22 (MTGGPIASWRTAAQGHLTPDEN) form a disordered region. The PFTB 1 repeat unit spans residues 147-189 (ATEIKRYLFARQHPEDGGWGLHIEAHSSVFGTCMNYVALRLIG). The active-site Proton donor is D481. PFTB repeat units lie at residues 508-553 (LKDS…MIGY), 585-625 (KDKA…ASVG), and 634-675 (ARRG…VQTA).

The protein belongs to the terpene cyclase/mutase family.

Its subcellular location is the lipid droplet. It localises to the endoplasmic reticulum membrane. It catalyses the reaction (S)-2,3-epoxysqualene = lanosterol. It functions in the pathway steroid metabolism; ergosterol biosynthesis. Lanosterol synthase; part of the third module of ergosterol biosynthesis pathway that includes the late steps of the pathway. ERG7A and ERG7B catalyze the cyclization of (S)-2,3 oxidosqualene to lanosterol, a reaction that forms the sterol core. The third module or late pathway involves the ergosterol synthesis itself through consecutive reactions that mainly occur in the endoplasmic reticulum (ER) membrane. Firstly, the squalene synthase erg9 catalyzes the condensation of 2 farnesyl pyrophosphate moieties to form squalene, which is the precursor of all steroids. Squalene synthase is crucial for balancing the incorporation of farnesyl diphosphate (FPP) into sterol and nonsterol isoprene synthesis. Secondly, squalene is converted into lanosterol by the consecutive action of the squalene epoxidase erg1 and the lanosterol synthase erg7. Then, the delta(24)-sterol C-methyltransferase erg6 methylates lanosterol at C-24 to produce eburicol. Eburicol is the substrate of the sterol 14-alpha demethylase encoded by cyp51A and cyp51B, to yield 4,4,24-trimethyl ergosta-8,14,24(28)-trienol. The C-14 reductase erg24 then reduces the C14=C15 double bond which leads to 4,4-dimethylfecosterol. A sequence of further demethylations at C-4, involving the C-4 demethylation complex containing the C-4 methylsterol oxidases erg25A or erg25B, the sterol-4-alpha-carboxylate 3-dehydrogenase erg26 and the 3-keto-steroid reductase erg27, leads to the production of fecosterol via 4-methylfecosterol. The C-8 sterol isomerase erg2 then catalyzes the reaction which results in unsaturation at C-7 in the B ring of sterols and thus converts fecosterol to episterol. The sterol-C5-desaturase erg3B then catalyzes the introduction of a C-5 double bond in the B ring to produce 5-dehydroepisterol. The 2 other sterol-C5-desaturases, erg3A and erg3C, seem to be less important in ergosterol biosynthesis. The C-22 sterol desaturase erg5 further converts 5-dehydroepisterol into ergosta-5,7,22,24(28)-tetraen-3beta-ol by forming the C-22(23) double bond in the sterol side chain. Finally, ergosta-5,7,22,24(28)-tetraen-3beta-ol is substrate of the C-24(28) sterol reductases erg4A and erg4B to produce ergosterol. Possible alternative sterol biosynthetic pathways might exist from fecosterol to ergosterol, depending on the activities of the erg3 isoforms. The sequence is that of Lanosterol synthase erg7A from Aspergillus fumigatus (strain ATCC MYA-4609 / CBS 101355 / FGSC A1100 / Af293) (Neosartorya fumigata).